Consider the following 452-residue polypeptide: MSKITKVFAREILDSRGNPTIQVDVYTLAGGFGSAIVPSGASTGSREALELRDTNTKYADNWYGQKGVMTAVDNVNNIIAPEIIGLCCKNQRLVDQKMIELDGTPNKEKLGANAILGVSLAVAKAAANELRMPLFRYLGGTNPTLMPVPMLNVINGGEHASNTLDFQEFMIMPLGFRTFKEALQAANKVFHNLAKLLKKSGFETQVGDEGGFAPNFNSHEQALDFLVDAIKESGFNPGFKGENAVAIAIDAAASDFYNGQKYVFKKLMAASLSKNQADLDEKFEFSSEELLNYYGQLLAKYPIISIEDGFAESDWQGFIAFNQKYGNNHQIVGDDLTVTNVEILKKAINLKAINSILIKLNQIGTLSETLDAIHLAQKSGMTAVISHRSGESEDTTIADLAVAVSSGQIKTGSLSRTDRIAKYNRLLVIEEYLNSYAKADYIGREVFYNLKK.

Position 167 (Gln-167) interacts with (2R)-2-phosphoglycerate. Glu-209 functions as the Proton donor in the catalytic mechanism. Mg(2+)-binding residues include Asp-250, Glu-307, and Asp-334. Positions 359, 388, 389, and 410 each coordinate (2R)-2-phosphoglycerate. Lys-359 serves as the catalytic Proton acceptor.

This sequence belongs to the enolase family. It depends on Mg(2+) as a cofactor.

Its subcellular location is the cytoplasm. The protein localises to the secreted. The protein resides in the cell surface. It carries out the reaction (2R)-2-phosphoglycerate = phosphoenolpyruvate + H2O. Its pathway is carbohydrate degradation; glycolysis; pyruvate from D-glyceraldehyde 3-phosphate: step 4/5. Its function is as follows. Catalyzes the reversible conversion of 2-phosphoglycerate (2-PG) into phosphoenolpyruvate (PEP). It is essential for the degradation of carbohydrates via glycolysis. This is Enolase from Mesomycoplasma hyopneumoniae (strain 7448) (Mycoplasma hyopneumoniae).